The following is a 196-amino-acid chain: Guanylate kinase (196 aa).

The disordered stretch occupies residues methionine 1–valine 24. The 179-residue stretch at lysine 13–alanine 191 folds into the Guanylate kinase-like domain. Residue glycine 20–serine 27 coordinates ATP.

Belongs to the guanylate kinase family.

The protein localises to the cytoplasm. It carries out the reaction GMP + ATP = GDP + ADP. Its function is as follows. Essential for recycling GMP and indirectly, cGMP. This Thermobifida fusca (strain YX) protein is Guanylate kinase.